The sequence spans 160 residues: Ribonuclease P protein component 2 (160 aa).

It belongs to the eukaryotic/archaeal RNase P protein component 2 family. As to quaternary structure, consists of a catalytic RNA component and at least 4-5 protein subunits.

It is found in the cytoplasm. It catalyses the reaction Endonucleolytic cleavage of RNA, removing 5'-extranucleotides from tRNA precursor.. In terms of biological role, part of ribonuclease P, a protein complex that generates mature tRNA molecules by cleaving their 5'-ends. This is Ribonuclease P protein component 2 from Methanoculleus marisnigri (strain ATCC 35101 / DSM 1498 / JR1).